Reading from the N-terminus, the 298-residue chain is ATP synthase gamma chain (298 aa).

Belongs to the ATPase gamma chain family. F-type ATPases have 2 components, CF(1) - the catalytic core - and CF(0) - the membrane proton channel. CF(1) has five subunits: alpha(3), beta(3), gamma(1), delta(1), epsilon(1). CF(0) has three main subunits: a, b and c.

It localises to the cell inner membrane. Its function is as follows. Produces ATP from ADP in the presence of a proton gradient across the membrane. The gamma chain is believed to be important in regulating ATPase activity and the flow of protons through the CF(0) complex. The polypeptide is ATP synthase gamma chain (Francisella philomiragia subsp. philomiragia (strain ATCC 25017 / CCUG 19701 / FSC 153 / O#319-036)).